The primary structure comprises 430 residues: F-box/kelch-repeat protein At4g33290 (430 aa).

One can recognise an F-box domain in the interval 1–44; the sequence is MITDLPKDLIEEILSRVSMTSMRVVRLTCKSWNTLSNSESFKKM. Kelch repeat units follow at residues 161–207, 312–363, and 383–430; these read LLRF…CVQG, VPFI…IIEE, and LVRI…RPTR.

This Arabidopsis thaliana (Mouse-ear cress) protein is F-box/kelch-repeat protein At4g33290.